The chain runs to 883 residues: EEF1AKMT4-ECE2 readthrough transcript protein (883 aa).

The segment at 1-160 (MASPGAGRAP…VHTVDQVLSE (160 aa)) is methyltransferase-like region. Residues 1 to 178 (MASPGAGRAP…QLLGSRTQLE (178 aa)) lie on the Cytoplasmic side of the membrane. S-adenosyl-L-methionine-binding residues include Trp26 and Tyr30. A Phosphotyrosine modification is found at Tyr39. Residues Trp41, Gly66, 88 to 89 (DY), 113 to 114 (DV), and Lys130 each bind S-adenosyl-L-methionine. Residues 179–199 (LVLAGASLLLAALLLGCLVAL) traverse the membrane as a helical segment. The Lumenal segment spans residues 200–883 (GVQYHRDPSH…MNPGQLCEVW (684 aa)). The region spanning 211–883 (TCLTEACIRV…MNPGQLCEVW (673 aa)) is the Peptidase M13 domain. Cystine bridges form between Cys212–Cys217, Cys235–Cys868, Cys243–Cys828, Cys299–Cys548, and Cys757–Cys880. N-linked (GlcNAc...) asparagine glycans are attached at residues Asn279, Asn283, Asn324, Asn384, Asn429, Asn496, and Asn652. Residue His720 participates in Zn(2+) binding. Glu721 is an active-site residue. Position 724 (His724) interacts with Zn(2+). Residues Asn745 and Asn753 are each glycosylated (N-linked (GlcNAc...) asparagine). Glu780 serves as a coordination point for Zn(2+). The active-site Proton donor is the Asp784.

In the N-terminal section; belongs to the methyltransferase superfamily. This sequence in the C-terminal section; belongs to the peptidase M13 family. Requires Zn(2+) as cofactor.

It is found in the golgi apparatus membrane. The protein resides in the cytoplasmic vesicle. Its subcellular location is the secretory vesicle membrane. The catalysed reaction is Hydrolysis of the 21-Trp-|-Val-22 bond in big endothelin to form endothelin 1.. Inhibited by phosphoramidon. Functionally, converts big endothelin-1 to endothelin-1. May also have methyltransferase activity. May play a role in amyloid-beta processing. The protein is EEF1AKMT4-ECE2 readthrough transcript protein of Homo sapiens (Human).